Here is a 257-residue protein sequence, read N- to C-terminus: ATP synthase subunit a (257 aa).

Helical transmembrane passes span 34-54 (ITNIGLYMTIAAFIAFYFSIL), 93-113 (YFPFMYTLFIFILINNLIGMV), 122-142 (HFILTFSLSFTVVLGATVLGF), 149-169 (FFSLFVPAGCPLGLLPLLVLI), 187-207 (ANILSGHMLLNILSGFTYNIM), and 210-230 (GIIFFILGLLPLAFIIAFSGL).

Belongs to the ATPase A chain family. In terms of assembly, F-type ATPases have 2 components, CF(1) - the catalytic core - and CF(0) - the membrane proton channel. CF(1) has five subunits: alpha(3), beta(3), gamma(1), delta(1), epsilon(1). CF(0) has three main subunits: a, b and c.

The protein resides in the mitochondrion inner membrane. Mitochondrial membrane ATP synthase (F(1)F(0) ATP synthase or Complex V) produces ATP from ADP in the presence of a proton gradient across the membrane which is generated by electron transport complexes of the respiratory chain. F-type ATPases consist of two structural domains, F(1) - containing the extramembraneous catalytic core and F(0) - containing the membrane proton channel, linked together by a central stalk and a peripheral stalk. During catalysis, ATP synthesis in the catalytic domain of F(1) is coupled via a rotary mechanism of the central stalk subunits to proton translocation. Key component of the proton channel; it may play a direct role in the translocation of protons across the membrane. The polypeptide is ATP synthase subunit a (ATP6) (Cochliobolus heterostrophus (Southern corn leaf blight fungus)).